A 510-amino-acid polypeptide reads, in one-letter code: DNA nucleotidylexotransferase (510 aa).

The Nuclear localization signal motif lies at 11 to 17 (PRRKQPK). Residues 27-124 (KYDIKFKDIA…QPVEIERKHR (98 aa)) enclose the BRCT domain. The tract at residues 254-258 (VGLRT) is involved in DNA binding. A 2'-deoxyribonucleoside 5'-triphosphate contacts are provided by residues 329–334 (GFRRGN) and 338–341 (HDVD). Mg(2+)-binding residues include Asp339, Asp341, and Asp434. 449-450 (GW) lines the a 2'-deoxyribonucleoside 5'-triphosphate pocket.

The protein belongs to the DNA polymerase type-X family. Requires Mg(2+) as cofactor.

It is found in the nucleus. The enzyme catalyses DNA(n) + a 2'-deoxyribonucleoside 5'-triphosphate = DNA(n+1) + diphosphate. Template-independent DNA polymerase which catalyzes the random addition of deoxynucleoside 5'-triphosphate to the 3'-end of a DNA initiator. One of the in vivo functions of this enzyme is the addition of nucleotides at the junction (N region) of rearranged Ig heavy chain and T-cell receptor gene segments during the maturation of B- and T-cells. The chain is DNA nucleotidylexotransferase (DNTT) from Ambystoma mexicanum (Axolotl).